Consider the following 324-residue polypeptide: MLEQVILFTIIMGFLISVLLSPIFIPFLRRLKFGQSIREEGPQSHQKKSGTPTMGGIMIIFSITITTIVMINKFSEISPEMFLLLFVTLGYGLLGFLDDYIKVAMKRNLGLTSKQKLIGQIVIAVIFYAVFHYYQFATTIRIPGTDVSFDLGWAYFILVVFMLVGGSNAVNLTDGLDGLLSGTAAIAFGAFAILAWNQSQYDVAIFSVAVAGAVLGFLVFNAHPAKVFMGDTGSLALGGAIVAIAILTKLEILLVIIGGVFVVETLSVILQVISFKTTGKRIFKMSPLHHHYELVGWSEWRVVVTFWTAGLLLAVLGIYIEVWL.

Helical transmembrane passes span 5–25, 51–71, 77–97, 117–137, 147–167, 176–196, 203–223, 227–248, and 302–322; these read VILFTIIMGFLISVLLSPIFI, TPTMGGIMIIFSITITTIVMI, ISPEMFLLLFVTLGYGLLGFL, LIGQIVIAVIFYAVFHYYQFA, VSFDLGWAYFILVVFMLVGGS, LDGLLSGTAAIAFGAFAILAW, VAIFSVAVAGAVLGFLVFNAH, VFMGDTGSLALGGAIVAIAILT, and VVVTFWTAGLLLAVLGIYIEV.

It belongs to the glycosyltransferase 4 family. MraY subfamily. Mg(2+) serves as cofactor.

The protein localises to the cell membrane. The enzyme catalyses UDP-N-acetyl-alpha-D-muramoyl-L-alanyl-gamma-D-glutamyl-meso-2,6-diaminopimeloyl-D-alanyl-D-alanine + di-trans,octa-cis-undecaprenyl phosphate = di-trans,octa-cis-undecaprenyl diphospho-N-acetyl-alpha-D-muramoyl-L-alanyl-D-glutamyl-meso-2,6-diaminopimeloyl-D-alanyl-D-alanine + UMP. Its pathway is cell wall biogenesis; peptidoglycan biosynthesis. Catalyzes the initial step of the lipid cycle reactions in the biosynthesis of the cell wall peptidoglycan: transfers peptidoglycan precursor phospho-MurNAc-pentapeptide from UDP-MurNAc-pentapeptide onto the lipid carrier undecaprenyl phosphate, yielding undecaprenyl-pyrophosphoryl-MurNAc-pentapeptide, known as lipid I. The polypeptide is Phospho-N-acetylmuramoyl-pentapeptide-transferase (Bacillus pumilus (strain SAFR-032)).